Here is a 123-residue protein sequence, read N- to C-terminus: Fluoride-specific ion channel FluC (123 aa).

4 consecutive transmembrane segments (helical) span residues 6–26, 38–58, 68–88, and 100–120; these read VALV…LSGV, LLVN…IFWG, FLGT…YETF, and LLNI…GFVL. Residues glycine 75 and serine 78 each coordinate Na(+).

It belongs to the fluoride channel Fluc/FEX (TC 1.A.43) family.

It is found in the cell membrane. The enzyme catalyses fluoride(in) = fluoride(out). Na(+) is not transported, but it plays an essential structural role and its presence is essential for fluoride channel function. Functionally, fluoride-specific ion channel. Important for reducing fluoride concentration in the cell, thus reducing its toxicity. The protein is Fluoride-specific ion channel FluC of Pyrococcus furiosus (strain ATCC 43587 / DSM 3638 / JCM 8422 / Vc1).